The chain runs to 392 residues: Frizzled-9 (392 aa).

Topologically, residues 1–35 (ACDNPEKFQYVEKSLSCAPRCSPGVDVYWSREDKD) are extracellular. The helical transmembrane segment at 36–56 (FAFVWMAVWSTLCFVSTAFTV) threads the bilayer. Topologically, residues 57–72 (LTFLLDPHRFQYPERP) are cytoplasmic. Residues 73-93 (IIFLSMCYNVYSVAFIIRSVA) traverse the membrane as a helical segment. The Extracellular segment spans residues 94 to 119 (GAETIACDRENGELYIIQEGLESTGC). A helical transmembrane segment spans residues 120 to 140 (TIVFLILYYFGMASSLWWVVL). At 141 to 161 (TLTWFLAAGKKWGHEAIEAHS) the chain is on the cytoplasmic side. A helical transmembrane segment spans residues 162–182 (SYFHMAAWGIPAMKTIVILTM). At 183-206 (RKVAGDELTGLCYVGSMDVSALTG) the chain is on the extracellular side. Residues 207-227 (FVLIPLSCYLVVGTSFILTGF) traverse the membrane as a helical segment. At 228 to 253 (VALFHIRKIMKTGGTNTEKLEKLMVK) the chain is on the cytoplasmic side. Residues 254–274 (IGVFSILYTVPATCVIVCYFY) traverse the membrane as a helical segment. The Extracellular segment spans residues 275 to 312 (ERLNVDYWNLRALERACVPLPGRRAADCSLEASVPTVA). The chain crosses the membrane as a helical span at residues 313–333 (VFMLKIFMSLVVGITSGVWVW). Over 334-392 (SSKTLQTWQSLCNRKLGVRTRGKPCSGVSCGGVHCHYKAPTVMLHMTKTDPYLDNPTHV) the chain is Cytoplasmic. Residues 336–341 (KTLQTW) carry the Lys-Thr-X-X-X-Trp motif, mediates interaction with the PDZ domain of Dvl family members motif. Positions 390 to 392 (THV) match the PDZ-binding motif.

This sequence belongs to the G-protein coupled receptor Fz/Smo family.

It localises to the cell membrane. Receptor for WNT2 that is coupled to the beta-catenin canonical signaling pathway, which leads to the activation of disheveled proteins, inhibition of GSK-3 kinase, nuclear accumulation of beta-catenin and activation of Wnt target genes. The chain is Frizzled-9 (FZD9) from Gallus gallus (Chicken).